The primary structure comprises 297 residues: Cell division protein FtsX (297 aa).

The Cytoplasmic segment spans residues 1–21 (MRFGFLLNEVLTGFRRNVTMT). A helical membrane pass occupies residues 22 to 42 (IAMILTTAISVGLFGGGMLVV). Residues 43 to 171 (RLADSSRAIY…LFAVLDGLSN (129 aa)) lie on the Extracellular side of the membrane. A helical membrane pass occupies residues 172–192 (AAFAVALVQAIGAILLIANMV). Residues 193 to 219 (QVAAYTRRTEIGIMRLVGASRWYTQLP) lie on the Cytoplasmic side of the membrane. Residues 220 to 240 (FLVEAMLAATMGVGIAVAGLM) traverse the membrane as a helical segment. Residues 241 to 267 (VVRALFLENALNQFYQANLIAKVDYAD) are Extracellular-facing. The helical transmembrane segment at 268 to 288 (ILFITPWLLLLGVAMSGLTAY) threads the bilayer. Over 289–297 (LTLRLYVRR) the chain is Cytoplasmic.

This sequence belongs to the ABC-4 integral membrane protein family. FtsX subfamily. In terms of assembly, forms a membrane-associated complex with FtsE.

It localises to the cell membrane. Functionally, part of the ABC transporter FtsEX involved in cellular division. In Mycobacterium tuberculosis (strain ATCC 25177 / H37Ra), this protein is Cell division protein FtsX.